A 283-amino-acid polypeptide reads, in one-letter code: Energy-coupling factor transporter ATP-binding protein EcfA1 (283 aa).

The 238-residue stretch at 7-244 folds into the ABC transporter domain; sequence VEFRHVSFTY…PELLQEIGLD (238 aa). 41–48 contacts ATP; it reads GHNGSGKS.

Belongs to the ABC transporter superfamily. Energy-coupling factor EcfA family. In terms of assembly, forms a stable energy-coupling factor (ECF) transporter complex composed of 2 membrane-embedded substrate-binding proteins (S component), 2 ATP-binding proteins (A component) and 2 transmembrane proteins (T component).

Its subcellular location is the cell membrane. Functionally, ATP-binding (A) component of a common energy-coupling factor (ECF) ABC-transporter complex. Unlike classic ABC transporters this ECF transporter provides the energy necessary to transport a number of different substrates. This is Energy-coupling factor transporter ATP-binding protein EcfA1 from Lactobacillus acidophilus (strain ATCC 700396 / NCK56 / N2 / NCFM).